Consider the following 443-residue polypeptide: Chromosome partition protein MukF (443 aa).

The segment at 209–237 (LDETSINLRELQDTLNAAGDKLQSQLLRI) is leucine-zipper.

It belongs to the MukF family. As to quaternary structure, interacts, and probably forms a ternary complex, with MukE and MukB via its C-terminal region. The complex formation is stimulated by calcium or magnesium. It is required for an interaction between MukE and MukB.

The protein localises to the cytoplasm. Its subcellular location is the nucleoid. Its function is as follows. Involved in chromosome condensation, segregation and cell cycle progression. May participate in facilitating chromosome segregation by condensation DNA from both sides of a centrally located replisome during cell division. Not required for mini-F plasmid partitioning. Probably acts via its interaction with MukB and MukE. Overexpression results in anucleate cells. It has a calcium binding activity. In Haemophilus ducreyi (strain 35000HP / ATCC 700724), this protein is Chromosome partition protein MukF.